Reading from the N-terminus, the 70-residue chain is Large ribosomal subunit protein eL43 (70 aa).

Cys36, Cys39, Cys55, and Cys58 together coordinate Zn(2+). Residues 36–58 (CPYCKTTGKVIRLASGIWYCKKC) form a C4-type zinc finger.

The protein belongs to the eukaryotic ribosomal protein eL43 family. Putative zinc-binding subfamily. In terms of assembly, part of the 50S ribosomal subunit. Zn(2+) serves as cofactor.

Binds to the 23S rRNA. This chain is Large ribosomal subunit protein eL43, found in Saccharolobus solfataricus (strain ATCC 35092 / DSM 1617 / JCM 11322 / P2) (Sulfolobus solfataricus).